Here is a 483-residue protein sequence, read N- to C-terminus: Uridine/cytidine kinase UKL1, chloroplastic (483 aa).

A chloroplast-targeting transit peptide spans 1–47 (MPEDSTAIDYVMEKASGPHFSGLRLDGLLSSPSKSSVSSPSHFRLSN). Residues 59–264 (PHQPFVIGVT…IVQHIHTKLG (206 aa)) form a uridine kinase region. Residues 274 to 483 (NVFVIETTFQ…FGDRYFGTDE (210 aa)) are uracil phosphoribosyltransferase. GTP contacts are provided by residues K298, R307, and 341 to 344 (CKKL). 2 residues coordinate 5-phospho-alpha-D-ribose 1-diphosphate: R351 and R376. R396 is a binding site for GTP. Residues D402, 407-410 (TGNS), and E473 contribute to the 5-phospho-alpha-D-ribose 1-diphosphate site. 472 to 474 (GEF) serves as a coordination point for uracil.

In the N-terminal section; belongs to the uridine kinase family. This sequence in the C-terminal section; belongs to the UPRTase family.

Its subcellular location is the plastid. It localises to the chloroplast. The catalysed reaction is cytidine + ATP = CMP + ADP + H(+). The enzyme catalyses uridine + ATP = UMP + ADP + H(+). It participates in pyrimidine metabolism; CTP biosynthesis via salvage pathway; CTP from cytidine: step 1/3. Its pathway is pyrimidine metabolism; UMP biosynthesis via salvage pathway; UMP from uridine: step 1/1. Its function is as follows. Involved in the pyrimidine salvage pathway. Phosphorylates uridine to uridine monophosphate (UMP). Phosphorylates cytidine to cytidine monophosphate (CMP). Does not possess uracil phosphoribosyltransferase (UPRTase) activity that catalyzes the conversion of uracil and 5-phospho-alpha-D-ribose 1-diphosphate (PRPP) to UMP and diphosphate. This chain is Uridine/cytidine kinase UKL1, chloroplastic, found in Arabidopsis thaliana (Mouse-ear cress).